The primary structure comprises 632 residues: tRNA uridine 5-carboxymethylaminomethyl modification enzyme MnmG (632 aa).

Residues 13–18, V125, and S180 contribute to the FAD site; that span reads GGGHAG. 273–287 contacts NAD(+); it reads GPRYCPSIEDKVVRF. Q370 provides a ligand contact to FAD.

The protein belongs to the MnmG family. In terms of assembly, homodimer. Heterotetramer of two MnmE and two MnmG subunits. FAD serves as cofactor.

It is found in the cytoplasm. In terms of biological role, NAD-binding protein involved in the addition of a carboxymethylaminomethyl (cmnm) group at the wobble position (U34) of certain tRNAs, forming tRNA-cmnm(5)s(2)U34. The protein is tRNA uridine 5-carboxymethylaminomethyl modification enzyme MnmG of Nitrosospira multiformis (strain ATCC 25196 / NCIMB 11849 / C 71).